We begin with the raw amino-acid sequence, 2504 residues long: MEEVVIAGMSGKLPESENLQEFWANLIGGVDMVTDDDRRWKAGLYGLPKRSGKLKDLSKFDASFFGVHPKQAHTMDPQLRLLLEVSYEAIVDGGINPASLRGTNTGVWVGVSGSEASEALSRDPETLLGYSMVGCQRAMMANRLSFFFDFKGPSIALDTACSSSLLALQNAYQAIRSGECPAALVGGINLLLKPNTSVQFMKLGMLSPDGTCRSFDDSGSGYCRSEAVVAVLLTKKSLARRVYATILNAGTNTDGSKEQGVTFPSGEVQEQLICSLYQPAGLAPESLEYIEAHGTGTKVGDPQELNGITRSLCAFRQAPLLIGSTKSNMGHPEPASGLAALTKVLLSLEHGVWAPNLHFHNPNPEIPALLDGRLQVVDRPLPVRGGNVGINSFGFGGSNVHVILQPNTRQAPAPTAHAALPHLLHASGRTLEAVQDLLEQGRQHSQDLAFVSMLNDIAATPTAAMPFRGYTVLGVEGRVQEVQQVSTNKRPLWFICSGMGTQWRGMGLSLMRLDSFRESILRSDEAVKPLGVKVSDLLLSTDERTFDDIVHAFVSLTAIQIALIDLLTSVGLKPDGIIGHSLGEVACGYADGCLSQREAVLAAYWRGQCIKDAHLPPGSMAAVGLSWEECKQRCPAGVVPACHNSEDTVTISGPQAAVNEFVEQLKQEGVFAKEVRTGGLAFHSYFMEGIAPTLLQALKKVIREPRPRSARWLSTSIPEAQWQSSLARTSSAEYNVNNLVSPVLFQEALWHIPEHAVVLEIAPHALLQAVLKRGVKSSCTIIPLMKRDHKDNLEFFLTNLGKVHLTGINVNPNALFPPVEFPAPRGTPLISPHIKWDHSQTWDVPVAEDFPNGSSSSSATVYSIDASPESPDHYLVDHCIDGRVIFPGTGYLCLVWKTLARSLGLSLEETPVVFENVSFHQATILPKTGTVALEVRLLEASHAFEVSDTGNLIVSGKVYLWEDPNSKLFDHPEVPTPPESASVSRLTQGEVYKELRLRGYDYGPQFQGICEATLEGEQGKLLWKDNWVTFMDTMLQVSILGSSQQSLQLPTRVTAIYIDPATHRQKVYRLKEDTQVADVTTSRCLGITVSGGIHISRLQTTATSRRQQEQLVPTLEKFVFTPHMEAECLSESTALQKELQLCKGLARALQTKATQQGLKAAMLGQEDPPQHGLPRLLAAACQLQLNGNLQLELGEALAQERLLLPEDPLISGLLNSQALKACVDTALENLSTLKMKVAEVLAGEGHLYSRIPALLNTQPMLQLEYTATDRHPQALKDVQTKLQQHDVAQGQWNPSDPAPSSLGALDLLVCNCALATLGDPALALDNMVAALKEGGFLLVHTVLKGHALGETLACLPSEVQPAPSLLSQEEWESLFSRKALHLVGLKRSFYGTALFLCRRAIPQEKPIFLSVEDTSFQWVDSLKSTLATSSSQPVWLTAMDCPTSGVVGLVNCLRKEPGGHRIRCILLSNLSNTSHAPKLDPGSPELQQVLKHDLVMNVYRDGAWGAFRHFQLEQDKPKEQTAHAFVNVLTRGDLASIRWVSSPLKHTQPSSSGAQLCTVYYASLNFRDIMLATGKLSPDAIPGKWASRDCMLGMEFSGRDRCGRRVMGLVPAEGLATSVLLSSDFLWDVPSSWTLEEAASVPVVYTTAYYSLVVRGRIQRGETVLIHSGSGGVGQAAISIALSLGCRVFTTVGSAEKRAYLQARFPQLDDTSFANSRDTSFEQHVLLHTGGKGVDLVLNSLAEEKLQASVRCLAQHGRFLEIGKFDLSNNHPLGMAIFLKNVTFHGILLDALFEEANDSWREVAALLKAGIRDGVVKPLKCTVFPKAQVEDAFRYMAQGKHIGKVLVQVREEEPEAVLPGAQPTLISAISKTFCPAHKSYIITGGLGGFGLELARWLVLRGAQRLVLTSRSGIRTGYQAKHIREWRRQGIQVLVSTSNVSSLEGARALIAEATKLGPVGGVFNLAMVLRDAMLENQTPELFQDVNKPKYNGTLNLDRATREACPELDYFVAFSSVSCGRGNAGQTNYGFANSTMERICEQRRHDGLPGLAVQWGAIGDVGIVLEAMGTNDTVIGGTLPQRISSCMEVLDLFLNQPHAVLSSFVLAEKKAVAHGDGDTQRDLVKAVAHILGIRDLAGINLDSTLADLGLDSLMGVEVRQILEREHDLVLPMREVRQLTLRKLQEMSSKTDSATDTTAPKSRSDTSLKQNQLNLSTLLVNPEGPTLTQLNSVQSSERPLFLVHPIEGSTTVFHSLAAKLSVPTYGLQCTQAAPLDSIPNLAAYYIDCIKQVQPEGPYRIAGYSFGACVAFEMCSQLQAQQGPAPTHNNLFLFDGSHTYVLAYTQSYRAKMTPGCEAEAEAEALCFFIKQFLDVEHSKVLEALLPLKSLEDRVAASVDLITKSHHSLDRRELSFAAVSFYHKLRAADQYKPKAKYHGNVTLLRAKTGGTYGEDLGADYNLSQVCDGKVSVHIIEGDHRTLLEGSGLESIINIIHSSLAEPRVSVREG.

Methionine 1 is subject to N-acetylmethionine. A Ketosynthase family 3 (KS3) domain is found at 1-406 (MEEVVIAGMS…GSNVHVILQP (406 aa)). Lysine 59 bears the N6-acetyllysine mark. A Phosphoserine modification is found at serine 63. Lysine 70 is subject to N6-acetyllysine. Cysteine 161 (for beta-ketoacyl synthase activity) is an active-site residue. Serine 207 carries the phosphoserine modification. Catalysis depends on histidine 293, which acts as the For beta-ketoacyl synthase activity. Lysine 298 is modified (N6-acetyllysine). Histidine 331 serves as the catalytic For beta-ketoacyl synthase activity. The tract at residues 429-817 (RTLEAVQDLL…INVNPNALFP (389 aa)) is acyl and malonyl transferases. Lysine 528 carries the post-translational modification N6-acetyllysine. Serine 581 acts as the For malonyltransferase activity in catalysis. Residues 647 to 648 (DT) and phenylalanine 671 contribute to the an acyl-CoA site. Lysine 673 bears the N6-acetyllysine mark. Serine 725 carries the phosphoserine modification. Position 773 (arginine 773) interacts with an acyl-CoA. Lysine 790 carries the N6-acetyllysine modification. Residues 844–967 (VPVAEDFPNG…VYLWEDPNSK (124 aa)) are N-terminal hotdog fold. In terms of domain architecture, PKS/mFAS DH spans 844–1104 (VPVAEDFPNG…ISRLQTTATS (261 aa)). The active-site Proton acceptor; for dehydratase activity is the histidine 878. A C-terminal hotdog fold region spans residues 982 to 1104 (SVSRLTQGEV…ISRLQTTATS (123 aa)). The residue at position 993 (lysine 993) is an N6-acetyllysine. Aspartate 1032 serves as the catalytic Proton donor; for dehydratase activity. An N6-acetyllysine mark is found at lysine 1071 and lysine 1276. An S-nitrosocysteine modification is found at cysteine 1464. A phosphoserine mark is found at serine 1577 and serine 1587. The segment at 1628–1856 (DVPSSWTLEE…VQVREEEPEA (229 aa)) is enoyl reductase. 1664 to 1681 (VLIHSGSGGVGQAAISIA) contributes to the NADP(+) binding site. N6-(pyridoxal phosphate)lysine; alternate is present on lysine 1697. Residue lysine 1697 is modified to N6-acetyllysine; alternate. Residues lysine 1764 and lysine 1840 each carry the N6-acetyllysine modification. Residues 1857-2111 (VLPGAQPTLI…FVLAEKKAVA (255 aa)) are beta-ketoacyl reductase. Residue 1879–1894 (SYIITGGLGGFGLELA) coordinates NADP(+). An N6-acetyllysine modification is found at lysine 1988. Cysteine 2084 carries the post-translational modification S-nitrosocysteine. A Carrier domain is found at 2112–2192 (HGDGDTQRDL…EMSSKTDSAT (81 aa)). Serine 2150 is modified (O-(pantetheine 4'-phosphoryl)serine; alternate). Phosphoserine; alternate is present on serine 2150. The tract at residues 2181-2205 (LQEMSSKTDSATDTTAPKSRSDTSL) is disordered. Over residues 2185-2198 (SSKTDSATDTTAPK) the composition is skewed to low complexity. Phosphoserine occurs at positions 2190 and 2229. The segment at 2201–2504 (SDTSLKQNQL…AEPRVSVREG (304 aa)) is thioesterase. Residue serine 2301 is the For thioesterase activity of the active site. An N6-acetyllysine modification is found at lysine 2384. Lysine 2442 is covalently cross-linked (Glycyl lysine isopeptide (Lys-Gly) (interchain with G-Cter in SUMO2)). Histidine 2474 (for thioesterase activity) is an active-site residue.

Homodimer which is arranged in a head to tail fashion. Interacts with CEACAM1; this interaction is insulin and phosphorylation-dependent; reduces fatty-acid synthase activity. Post-translationally, S-nitrosylation of Fatty acid synthase at cysteine residues Cys-1464 or Cys-2084 is important for the enzyme dimerization. In adipocytes, S-nitrosylation of Fatty acid synthase occurs under physiological conditions and gradually increases during adipogenesis.

The protein localises to the cytoplasm. It is found in the melanosome. The catalysed reaction is acetyl-CoA + n malonyl-CoA + 2n NADPH + 2n H(+) = a long-chain fatty acid + (n+1) CoA + n CO2 + 2n NADP(+).. It catalyses the reaction holo-[ACP] + acetyl-CoA = acetyl-[ACP] + CoA. The enzyme catalyses holo-[ACP] + malonyl-CoA = malonyl-[ACP] + CoA. It carries out the reaction a fatty acyl-[ACP] + malonyl-[ACP] + H(+) = a 3-oxoacyl-[ACP] + holo-[ACP] + CO2. The catalysed reaction is a (3R)-hydroxyacyl-[ACP] + NADP(+) = a 3-oxoacyl-[ACP] + NADPH + H(+). It catalyses the reaction a (3R)-hydroxyacyl-[ACP] = a (2E)-enoyl-[ACP] + H2O. The enzyme catalyses a 2,3-saturated acyl-[ACP] + NADP(+) = a (2E)-enoyl-[ACP] + NADPH + H(+). It carries out the reaction hexadecanoyl-[ACP] + H2O = hexadecanoate + holo-[ACP] + H(+). The catalysed reaction is acetyl-[ACP] + malonyl-[ACP] + H(+) = 3-oxobutanoyl-[ACP] + holo-[ACP] + CO2. It catalyses the reaction 3-oxobutanoyl-[ACP] + NADPH + H(+) = (3R)-hydroxybutanoyl-[ACP] + NADP(+). The enzyme catalyses (3R)-hydroxybutanoyl-[ACP] = (2E)-butenoyl-[ACP] + H2O. It carries out the reaction (2E)-butenoyl-[ACP] + NADPH + H(+) = butanoyl-[ACP] + NADP(+). The catalysed reaction is butanoyl-[ACP] + malonyl-[ACP] + H(+) = 3-oxohexanoyl-[ACP] + holo-[ACP] + CO2. It catalyses the reaction 3-oxohexanoyl-[ACP] + NADPH + H(+) = (3R)-hydroxyhexanoyl-[ACP] + NADP(+). The enzyme catalyses (3R)-hydroxyhexanoyl-[ACP] = (2E)-hexenoyl-[ACP] + H2O. It carries out the reaction (2E)-hexenoyl-[ACP] + NADPH + H(+) = hexanoyl-[ACP] + NADP(+). The catalysed reaction is hexanoyl-[ACP] + malonyl-[ACP] + H(+) = 3-oxooctanoyl-[ACP] + holo-[ACP] + CO2. It catalyses the reaction 3-oxooctanoyl-[ACP] + NADPH + H(+) = (3R)-hydroxyoctanoyl-[ACP] + NADP(+). The enzyme catalyses (3R)-hydroxyoctanoyl-[ACP] = (2E)-octenoyl-[ACP] + H2O. It carries out the reaction (2E)-octenoyl-[ACP] + NADPH + H(+) = octanoyl-[ACP] + NADP(+). The catalysed reaction is octanoyl-[ACP] + malonyl-[ACP] + H(+) = 3-oxodecanoyl-[ACP] + holo-[ACP] + CO2. It catalyses the reaction 3-oxodecanoyl-[ACP] + NADPH + H(+) = (3R)-hydroxydecanoyl-[ACP] + NADP(+). The enzyme catalyses (3R)-hydroxydecanoyl-[ACP] = (2E)-decenoyl-[ACP] + H2O. It carries out the reaction (2E)-decenoyl-[ACP] + NADPH + H(+) = decanoyl-[ACP] + NADP(+). The catalysed reaction is decanoyl-[ACP] + malonyl-[ACP] + H(+) = 3-oxododecanoyl-[ACP] + holo-[ACP] + CO2. It catalyses the reaction 3-oxododecanoyl-[ACP] + NADPH + H(+) = (3R)-hydroxydodecanoyl-[ACP] + NADP(+). The enzyme catalyses (3R)-hydroxydodecanoyl-[ACP] = (2E)-dodecenoyl-[ACP] + H2O. It carries out the reaction (2E)-dodecenoyl-[ACP] + NADPH + H(+) = dodecanoyl-[ACP] + NADP(+). The catalysed reaction is dodecanoyl-[ACP] + malonyl-[ACP] + H(+) = 3-oxotetradecanoyl-[ACP] + holo-[ACP] + CO2. It catalyses the reaction 3-oxotetradecanoyl-[ACP] + NADPH + H(+) = (3R)-hydroxytetradecanoyl-[ACP] + NADP(+). The enzyme catalyses (3R)-hydroxytetradecanoyl-[ACP] = (2E)-tetradecenoyl-[ACP] + H2O. It carries out the reaction (2E)-tetradecenoyl-[ACP] + NADPH + H(+) = tetradecanoyl-[ACP] + NADP(+). The catalysed reaction is tetradecanoyl-[ACP] + malonyl-[ACP] + H(+) = 3-oxohexadecanoyl-[ACP] + holo-[ACP] + CO2. It catalyses the reaction 3-oxohexadecanoyl-[ACP] + NADPH + H(+) = (3R)-hydroxyhexadecanoyl-[ACP] + NADP(+). The enzyme catalyses (3R)-hydroxyhexadecanoyl-[ACP] = (2E)-hexadecenoyl-[ACP] + H2O. It carries out the reaction (2E)-hexadecenoyl-[ACP] + NADPH + H(+) = hexadecanoyl-[ACP] + NADP(+). The catalysed reaction is hexadecanoyl-[ACP] + malonyl-[ACP] + H(+) = 3-oxooctadecanoyl-[ACP] + holo-[ACP] + CO2. It catalyses the reaction 3-oxooctadecanoyl-[ACP] + NADPH + H(+) = (3R)-hydroxyoctadecanoyl-[ACP] + NADP(+). The enzyme catalyses (3R)-hydroxyoctadecanoyl-[ACP] = (2E)-octadecenoyl-[ACP] + H2O. It carries out the reaction (2E)-octadecenoyl-[ACP] + NADPH + H(+) = octadecanoyl-[ACP] + NADP(+). The catalysed reaction is tetradecanoyl-[ACP] + H2O = tetradecanoate + holo-[ACP] + H(+). Its pathway is lipid metabolism; fatty acid biosynthesis. Its function is as follows. Fatty acid synthetase is a multifunctional enzyme that catalyzes the de novo biosynthesis of long-chain saturated fatty acids starting from acetyl-CoA and malonyl-CoA in the presence of NADPH. This multifunctional protein contains 7 catalytic activities and a site for the binding of the prosthetic group 4'-phosphopantetheine of the acyl carrier protein ([ACP]) domain. The chain is Fatty acid synthase (Fasn) from Mus musculus (Mouse).